We begin with the raw amino-acid sequence, 252 residues long: 7-cyano-7-deazaguanine synthase (252 aa).

Residue 22-32 (FSGGQDSTTCL) participates in ATP binding. Zn(2+) contacts are provided by cysteine 215, cysteine 230, cysteine 233, and cysteine 236.

The protein belongs to the QueC family. Requires Zn(2+) as cofactor.

It carries out the reaction 7-carboxy-7-deazaguanine + NH4(+) + ATP = 7-cyano-7-deazaguanine + ADP + phosphate + H2O + H(+). The protein operates within purine metabolism; 7-cyano-7-deazaguanine biosynthesis. Catalyzes the ATP-dependent conversion of 7-carboxy-7-deazaguanine (CDG) to 7-cyano-7-deazaguanine (preQ(0)). In Granulibacter bethesdensis (strain ATCC BAA-1260 / CGDNIH1), this protein is 7-cyano-7-deazaguanine synthase.